An 898-amino-acid polypeptide reads, in one-letter code: DNA damage-induced apoptosis suppressor protein (898 aa).

Disordered stretches follow at residues 191 to 210 (CGSQ…DSDL), 643 to 670 (SINT…HEGS), and 710 to 749 (YPIN…FEES). Polar residues-rich tracts occupy residues 643–664 (SINT…PSSS) and 710–725 (YPIN…KPSL). Positions 726-741 (QSISPSRYSRPRSQSD) are enriched in low complexity.

In terms of tissue distribution, highly expressed in the testis, spleen and heart. Expressed at high levels in the primary spermatocytes and to a lesser extent in the round spermatids. Also found in the bone marrow, brain, lung, kidney and liver.

Its subcellular location is the cytoplasm. The protein localises to the nucleus. May be an anti-apoptotic protein involved in DNA repair or cell survival. The protein is DNA damage-induced apoptosis suppressor protein (Ddias) of Mus musculus (Mouse).